A 1035-amino-acid chain; its full sequence is Condensin complex subunit 3 (1035 aa).

2 HEAT repeats span residues 113–150 (RFVDQFIRHVLRGVESPDKNVRFRVLQLLAVIMDNIGE) and 153–191 (ESLFNLLILSLNKRIYDREPTVRIQAVFCLTKFQDEEQT). Ser-198 is subject to Phosphoserine. An HEAT 3 repeat occupies 201–239 (EENFEATRTLVASIQNDPSAEVRRAAMLNLINDNNTRPY). The disordered stretch occupies residues 500–536 (EEKIKSKKINRRNETSVDEEDENGTHNDEVNEDEEDD). HEAT repeat units follow at residues 597–635 (ILIASLMDTLITPAVRNTAPNIRELGVKNLGLCCLLDVK) and 827–864 (VQLTFLIDVLKIYAQIEKKEIKKMIITNINAIFLSSEQ). A compositionally biased stretch (basic and acidic residues) spans 909 to 919 (ERSETQTKDEN). 2 disordered regions span residues 909–934 (ERSETQTKDENNTANDQYSSILGNSF) and 959–995 (TTVNISAVDNTTEQSNSRKRTRSEAEQIDTSKNLENM). Composition is skewed to polar residues over residues 920–934 (NTANDQYSSILGNSF) and 959–973 (TTVNISAVDNTTEQS). Ser-933 bears the Phosphoserine mark. Phosphoserine is present on Ser-981. Polar residues predominate over residues 986–995 (IDTSKNLENM). Position 1008 is a phosphoserine (Ser-1008). The interval 1012 to 1035 (PDEKSDAMSIDEEDKDSESFSEVC) is disordered.

It belongs to the CND3 (condensin subunit 3) family. Component of the condensin complex, which contains the SMC2 and SMC4 heterodimer, and three non SMC subunits that probably regulate the complex: BRN1, YCS4 and YCG1/YCS5.

The protein localises to the nucleus. It is found in the cytoplasm. It localises to the chromosome. Functionally, regulatory subunit of the condensin complex, a complex required for conversion of interphase chromatin into mitotic-like condense chromosomes. The condensin complex probably introduces positive supercoils into relaxed DNA in the presence of type I topoisomerases and converts nicked DNA into positive knotted forms in the presence of type II topoisomerases. The condensin complex probably also plays a role during interphase. This is Condensin complex subunit 3 (YCG1) from Saccharomyces cerevisiae (strain ATCC 204508 / S288c) (Baker's yeast).